Reading from the N-terminus, the 455-residue chain is Squamosa promoter-binding-like protein 16 (455 aa).

An SBP-type zinc finger spans residues 115-192; it reads CPSCAVDGCK…DGHNRRRRKP (78 aa). Zn(2+) is bound by residues Cys-118, Cys-123, Cys-140, His-143, Cys-159, Cys-162, His-166, and Cys-178. Positions 175–191 match the Bipartite nuclear localization signal motif; sequence KRSCRKRLDGHNRRRRK. Residues 182–204 form a disordered region; sequence LDGHNRRRRKPQPDPMNSASYLA.

In terms of tissue distribution, expressed in young panicles.

It is found in the nucleus. Its function is as follows. Trans-acting factor that binds specifically to the consensus nucleotide sequence 5'-TNCGTACAA-3'. May be involved in panicle development. The sequence is that of Squamosa promoter-binding-like protein 16 (SPL16) from Oryza sativa subsp. japonica (Rice).